A 202-amino-acid polypeptide reads, in one-letter code: Pyridoxal 5'-phosphate synthase subunit PdxT (202 aa).

50 to 52 (GES) serves as a coordination point for L-glutamine. Catalysis depends on cysteine 82, which acts as the Nucleophile. L-glutamine-binding positions include arginine 111 and 140–141 (IR). Residues histidine 176 and glutamate 178 each act as charge relay system in the active site.

It belongs to the glutaminase PdxT/SNO family. In the presence of PdxS, forms a dodecamer of heterodimers. Only shows activity in the heterodimer.

It catalyses the reaction aldehydo-D-ribose 5-phosphate + D-glyceraldehyde 3-phosphate + L-glutamine = pyridoxal 5'-phosphate + L-glutamate + phosphate + 3 H2O + H(+). It carries out the reaction L-glutamine + H2O = L-glutamate + NH4(+). Its pathway is cofactor biosynthesis; pyridoxal 5'-phosphate biosynthesis. Functionally, catalyzes the hydrolysis of glutamine to glutamate and ammonia as part of the biosynthesis of pyridoxal 5'-phosphate. The resulting ammonia molecule is channeled to the active site of PdxS. The sequence is that of Pyridoxal 5'-phosphate synthase subunit PdxT from Streptomyces coelicolor (strain ATCC BAA-471 / A3(2) / M145).